A 433-amino-acid polypeptide reads, in one-letter code: B3 domain-containing protein Os04g0676600 (433 aa).

2 disordered regions span residues M1 to Q29 and F216 to N283. Basic and acidic residues predominate over residues G13–F24. Residues F216–A229 show a composition bias toward low complexity. The segment covering D237 to E265 has biased composition (basic and acidic residues). The span at T269–N283 shows a compositional bias: polar residues. Positions L297–I399 form a DNA-binding region, TF-B3.

It localises to the nucleus. Probable transcription regulator that binds specifically to the DNA sequence 5'-CATGC-3' of the IDE1 element found in the promoter of the barley iron deficiency-inducible gene IDS2. The protein is B3 domain-containing protein Os04g0676600 of Oryza sativa subsp. japonica (Rice).